The primary structure comprises 325 residues: Probable tRNA pseudouridine synthase B (325 aa).

Asp-69 serves as the catalytic Nucleophile. Residues 236–311 enclose the PUA domain; that stretch reads LPKIVIKDSA…IAADIQRVMM (76 aa).

This sequence belongs to the pseudouridine synthase TruB family. Type 2 subfamily.

It carries out the reaction uridine(55) in tRNA = pseudouridine(55) in tRNA. Could be responsible for synthesis of pseudouridine from uracil-55 in the psi GC loop of transfer RNAs. This chain is Probable tRNA pseudouridine synthase B, found in Archaeoglobus fulgidus (strain ATCC 49558 / DSM 4304 / JCM 9628 / NBRC 100126 / VC-16).